The chain runs to 767 residues: Syn-copalyl diphosphate synthase (767 aa).

The segment at 45–74 (GPMLISKSPPYPASEETREWEAEGQHEHTD) is disordered. Basic and acidic residues predominate over residues 59 to 74 (EETREWEAEGQHEHTD). Lysine 233 lines the substrate pocket. The Mg(2+) site is built by aspartate 365 and aspartate 367. A DXDD motif motif is present at residues 365–368 (DIDD). Lysine 453 is a substrate binding site.

Mg(2+) serves as cofactor.

The catalysed reaction is (2E,6E,10E)-geranylgeranyl diphosphate = 9alpha-copalyl diphosphate. Functionally, catalyzes the conversion of geranylgeranyl diphosphate to the phytoalexin precursor syn-copalyl diphosphate. This chain is Syn-copalyl diphosphate synthase (CPS4), found in Oryza sativa subsp. indica (Rice).